The following is a 1317-amino-acid chain: Immunoglobulin superfamily member 1 (1317 aa).

The N-terminal stretch at methionine 1–threonine 20 is a signal peptide. Ig-like C2-type domains follow at residues serine 21–glutamate 112, glutamate 114–valine 211, proline 216–leucine 302, proline 311–asparagine 398, and valine 400–lysine 481. Residues serine 21–asparagine 499 are Extracellular-facing. N-linked (GlcNAc...) asparagine glycosylation occurs at asparagine 43. A disulfide bridge links cysteine 48 with cysteine 96. Cysteine 238 and cysteine 286 are oxidised to a cystine. 2 N-linked (GlcNAc...) asparagine glycosylation sites follow: asparagine 328 and asparagine 371. 2 cysteine pairs are disulfide-bonded: cysteine 333-cysteine 382 and cysteine 422-cysteine 465. Residues glutamate 500–isoleucine 520 traverse the membrane as a helical segment. The Cytoplasmic segment spans residues arginine 521 to glutamate 531. Residues alanine 532–cysteine 552 form a helical membrane-spanning segment. Over cysteine 553–isoleucine 1317 the chain is Extracellular. Ig-like C2-type domains follow at residues threonine 570–leucine 658, valine 659–isoleucine 753, proline 758–threonine 850, proline 854–serine 938, threonine 946–valine 1041, proline 1046–asparagine 1131, and proline 1142–aspartate 1223. A disulfide bridge connects residues cysteine 780 and cysteine 830. Asparagine 871 carries an N-linked (GlcNAc...) asparagine glycan. A disulfide bridge connects residues cysteine 876 and cysteine 923. N-linked (GlcNAc...) asparagine glycans are attached at residues asparagine 967 and asparagine 1063. 2 disulfide bridges follow: cysteine 1068–cysteine 1115 and cysteine 1164–cysteine 1207. The interval asparagine 1290–serine 1310 is disordered. Residues glycine 1296–valine 1309 are compositionally biased toward polar residues.

As to quaternary structure, interacts with INHA; the interaction is not confirmed by standard receptor binding assays. Interacts with ACVR1B; the interaction appears to be ligand-dependent as it is diminished by inhibin B and activin A. Interacts with ACVR2A, ACVR2B, ACVRL1 and BMPR1B. Interacts with HECTD1.

It localises to the membrane. It is found in the secreted. Its function is as follows. Seems to be a coreceptor in inhibin signaling, but seems not to be a high-affinity inhibin receptor. Antagonizes activin A signaling in the presence or absence of inhibin B. Necessary to mediate a specific antagonistic effect of inhibin B on activin-stimulated transcription. The chain is Immunoglobulin superfamily member 1 (Igsf1) from Mus musculus (Mouse).